Reading from the N-terminus, the 146-residue chain is Hemoglobin subunit beta (146 aa).

Val1 is subject to N-acetylvaline. Positions 2–146 constitute a Globin domain; sequence HLTDAEKAAI…VATALGHKYH (145 aa). At Lys59 the chain carries N6-acetyllysine. Heme b is bound at residue His63. The residue at position 82 (Lys82) is an N6-acetyllysine. Position 92 (His92) interacts with heme b. At Cys93 the chain carries S-nitrosocysteine. Lys144 is subject to N6-acetyllysine.

The protein belongs to the globin family. Heterotetramer of two alpha chains and two beta chains. In terms of tissue distribution, red blood cells.

Its function is as follows. Involved in oxygen transport from the lung to the various peripheral tissues. In Ondatra zibethicus (Muskrat), this protein is Hemoglobin subunit beta (HBB).